We begin with the raw amino-acid sequence, 117 residues long: Large ribosomal subunit protein bL20c (117 aa).

It belongs to the bacterial ribosomal protein bL20 family.

The protein localises to the plastid. The protein resides in the chloroplast. Binds directly to 23S ribosomal RNA and is necessary for the in vitro assembly process of the 50S ribosomal subunit. It is not involved in the protein synthesizing functions of that subunit. This chain is Large ribosomal subunit protein bL20c, found in Eucalyptus globulus subsp. globulus (Tasmanian blue gum).